Reading from the N-terminus, the 687-residue chain is Polyphosphate kinase (687 aa).

Asparagine 45 contributes to the ATP binding site. Mg(2+) contacts are provided by arginine 375 and arginine 405. Histidine 435 serves as the catalytic Phosphohistidine intermediate. The ATP site is built by tyrosine 472, arginine 568, and histidine 596.

Belongs to the polyphosphate kinase 1 (PPK1) family. Mg(2+) is required as a cofactor. In terms of processing, an intermediate of this reaction is the autophosphorylated ppk in which a phosphate is covalently linked to a histidine residue through a N-P bond.

The enzyme catalyses [phosphate](n) + ATP = [phosphate](n+1) + ADP. Its function is as follows. Catalyzes the reversible transfer of the terminal phosphate of ATP to form a long-chain polyphosphate (polyP). The protein is Polyphosphate kinase of Burkholderia ambifaria (strain MC40-6).